The following is a 281-amino-acid chain: Streptomycin biosynthesis protein StrF (281 aa).

It participates in antibiotic biosynthesis; streptomycin biosynthesis. Its function is as follows. May be involved in the formation of N-methyl-L-glucosamine. This is Streptomycin biosynthesis protein StrF (strF) from Streptomyces griseus.